A 334-amino-acid chain; its full sequence is Holliday junction branch migration complex subunit RuvB (334 aa).

The interval 4–186 is large ATPase domain (RuvB-L); that stretch reads ADRLIAPENP…FGITQRLEYY (183 aa). ATP-binding positions include Ile25, Arg26, Gly67, Lys70, Thr71, Thr72, 133 to 135, Arg176, Tyr186, and Arg223; that span reads EDY. Thr71 is a Mg(2+) binding site. The interval 187–257 is small ATPAse domain (RuvB-S); that stretch reads KVQDLQNIVQ…VADKALNMLD (71 aa). The tract at residues 260-334 is head domain (RuvB-H); sequence AQGFDYMDRK…RAYLHFGIEK (75 aa). DNA contacts are provided by Arg315 and Arg320.

Belongs to the RuvB family. In terms of assembly, homohexamer. Forms an RuvA(8)-RuvB(12)-Holliday junction (HJ) complex. HJ DNA is sandwiched between 2 RuvA tetramers; dsDNA enters through RuvA and exits via RuvB. An RuvB hexamer assembles on each DNA strand where it exits the tetramer. Each RuvB hexamer is contacted by two RuvA subunits (via domain III) on 2 adjacent RuvB subunits; this complex drives branch migration. In the full resolvosome a probable DNA-RuvA(4)-RuvB(12)-RuvC(2) complex forms which resolves the HJ.

It localises to the cytoplasm. The enzyme catalyses ATP + H2O = ADP + phosphate + H(+). Its function is as follows. The RuvA-RuvB-RuvC complex processes Holliday junction (HJ) DNA during genetic recombination and DNA repair, while the RuvA-RuvB complex plays an important role in the rescue of blocked DNA replication forks via replication fork reversal (RFR). RuvA specifically binds to HJ cruciform DNA, conferring on it an open structure. The RuvB hexamer acts as an ATP-dependent pump, pulling dsDNA into and through the RuvAB complex. RuvB forms 2 homohexamers on either side of HJ DNA bound by 1 or 2 RuvA tetramers; 4 subunits per hexamer contact DNA at a time. Coordinated motions by a converter formed by DNA-disengaged RuvB subunits stimulates ATP hydrolysis and nucleotide exchange. Immobilization of the converter enables RuvB to convert the ATP-contained energy into a lever motion, pulling 2 nucleotides of DNA out of the RuvA tetramer per ATP hydrolyzed, thus driving DNA branch migration. The RuvB motors rotate together with the DNA substrate, which together with the progressing nucleotide cycle form the mechanistic basis for DNA recombination by continuous HJ branch migration. Branch migration allows RuvC to scan DNA until it finds its consensus sequence, where it cleaves and resolves cruciform DNA. The polypeptide is Holliday junction branch migration complex subunit RuvB (Vibrio parahaemolyticus serotype O3:K6 (strain RIMD 2210633)).